A 436-amino-acid chain; its full sequence is DNA primase DnaG (436 aa).

Residues 169 to 243 (DSIIVVEGRA…DIDYVARAPY (75 aa)) enclose the Toprim domain. Residues Glu175, Asp217, and Asp219 each coordinate Mg(2+).

It belongs to the archaeal DnaG primase family. As to quaternary structure, forms a ternary complex with MCM helicase and DNA. Mg(2+) is required as a cofactor.

The catalysed reaction is ssDNA + n NTP = ssDNA/pppN(pN)n-1 hybrid + (n-1) diphosphate.. In terms of biological role, RNA polymerase that catalyzes the synthesis of short RNA molecules used as primers for DNA polymerase during DNA replication. The sequence is that of DNA primase DnaG from Methanococcus maripaludis (strain DSM 14266 / JCM 13030 / NBRC 101832 / S2 / LL).